We begin with the raw amino-acid sequence, 126 residues long: Large ribosomal subunit protein bL19 (126 aa).

It belongs to the bacterial ribosomal protein bL19 family.

This protein is located at the 30S-50S ribosomal subunit interface and may play a role in the structure and function of the aminoacyl-tRNA binding site. The polypeptide is Large ribosomal subunit protein bL19 (Albidiferax ferrireducens (strain ATCC BAA-621 / DSM 15236 / T118) (Rhodoferax ferrireducens)).